A 73-amino-acid polypeptide reads, in one-letter code: Aldehyde dehydrogenase (73 aa).

This sequence belongs to the aldehyde dehydrogenase family.

The catalysed reaction is an aldehyde + NAD(+) + H2O = a carboxylate + NADH + 2 H(+). It functions in the pathway alcohol metabolism; ethanol degradation; acetate from ethanol: step 2/2. This is Aldehyde dehydrogenase from Geobacillus stearothermophilus (Bacillus stearothermophilus).